The primary structure comprises 524 residues: Beta-glucosidase 22 (524 aa).

Positions 1–24 (MALQKFPLLGLLFLITIVVSSTIA) are cleaved as a signal peptide. An a beta-D-glucoside-binding site is contributed by glutamine 55. N-linked (GlcNAc...) asparagine glycosylation is present at asparagine 61. Residues histidine 158 and 203–204 (NE) contribute to the a beta-D-glucoside site. The active-site Proton donor is the glutamate 204. Cysteine 223 and cysteine 230 are joined by a disulfide. Residues tyrosine 346, glutamate 418, tryptophan 468, 475–476 (EW), and phenylalanine 484 each bind a beta-D-glucoside. Glutamate 418 acts as the Nucleophile in catalysis. N-linked (GlcNAc...) asparagine glycosylation is present at asparagine 494. The Prevents secretion from ER motif lies at 521–524 (KDEL).

The protein belongs to the glycosyl hydrolase 1 family. In terms of assembly, component of the PYK10 complex, at least composed of PYK10/BGLU23, BGLU21, BGLU22, JAL22, JAL23, PBP1/JAL30, PBP2/JAL31, JAL32, JAL33, JAL34, JAL35, GLL22 and GLL23. Expressed exclusively in roots.

It localises to the endoplasmic reticulum lumen. The catalysed reaction is Hydrolysis of terminal, non-reducing beta-D-glucosyl residues with release of beta-D-glucose.. Activated upon binding to PBP1 or PBP2. In terms of biological role, beta-D-glucosidase active on scopolin &gt;&gt; esculin &gt;&gt; 4-MU-glucoside. No activity with DIMBOA-glucoside, pNP-glucoside, oNP-glucoside and sinigrin as substrates. The protein is Beta-glucosidase 22 of Arabidopsis thaliana (Mouse-ear cress).